We begin with the raw amino-acid sequence, 417 residues long: UDP-N-acetylglucosamine 1-carboxyvinyltransferase (417 aa).

Position 22–23 (22–23) interacts with phosphoenolpyruvate; the sequence is KN. UDP-N-acetyl-alpha-D-glucosamine is bound at residue Arg93. Catalysis depends on Cys117, which acts as the Proton donor. Cys117 is subject to 2-(S-cysteinyl)pyruvic acid O-phosphothioketal. Residues Asp304 and Ile326 each coordinate UDP-N-acetyl-alpha-D-glucosamine.

Belongs to the EPSP synthase family. MurA subfamily.

It is found in the cytoplasm. The enzyme catalyses phosphoenolpyruvate + UDP-N-acetyl-alpha-D-glucosamine = UDP-N-acetyl-3-O-(1-carboxyvinyl)-alpha-D-glucosamine + phosphate. The protein operates within cell wall biogenesis; peptidoglycan biosynthesis. Cell wall formation. Adds enolpyruvyl to UDP-N-acetylglucosamine. The chain is UDP-N-acetylglucosamine 1-carboxyvinyltransferase from Neisseria gonorrhoeae (strain ATCC 700825 / FA 1090).